A 2776-amino-acid polypeptide reads, in one-letter code: Microtubule-associated protein 1A (2776 aa).

Residues S114, S117, S118, S121, and S155 each carry the phosphoserine modification. Y177 bears the Phosphotyrosine mark. The tract at residues 310 to 331 (PSKIKHRADSKESLKAAPKTAM) is disordered. S319 and S322 each carry phosphoserine. Copy 1 of the repeat occupies 336–338 (KRE). Positions 336 to 541 (KREEVLEEGA…TQDFEELKRE (206 aa)) are 11 X 3 AA approximate repeats of K-K-[DE]. Positions 345 to 390 (AKEARSELAKELAKSEKKAKEPSEKPPEKPSKPERVRTESSEALKA) are enriched in basic and acidic residues. Disordered regions lie at residues 345-678 (AKEA…KAES), 738-809 (TIPG…TELT), 846-1076 (EDQS…AGGQ), 1094-1210 (ETGE…ESLG), 1223-1651 (EKGP…SPEQ), 1685-1729 (DGQG…FKDF), 1744-1848 (LAES…APFS), and 1866-2648 (AELE…NGLK). Position 384 is a phosphoserine (S384). Basic residues predominate over residues 391–406 (EKRKLIKDKVGKKHLK). Composition is skewed to basic and acidic residues over residues 407–464 (EKIS…KPDL) and 484–500 (LKVD…ELSS). Repeat copies occupy residues 415-417 (KRD), 420-422 (KKE), 424-426 (KKE), 427-429 (RKE), 431-433 (KKE), 436-438 (RKE), 440-442 (KKD), 444-446 (KKD), and 449-451 (RKD). T504 carries the phosphothreonine modification. Phosphoserine occurs at positions 526 and 527. Residues 536 to 556 (EELKREERGLLAEPRDTELGE) show a composition bias toward basic and acidic residues. Repeat unit 11 spans residues 539-541 (KRE). Residues 567–579 (GRPSTAIQVTQPP) are compositionally biased toward polar residues. The span at 587–631 (QVEREKEVVPDFPEDKGSKNRAPDSGAEVEREKETWEERKPREAE) shows a compositional bias: basic and acidic residues. S604 and S611 each carry phosphoserine. At T633 the chain carries Phosphothreonine. The span at 640 to 667 (AREESEPEVKEDVIEKAELEEMEEVHPS) shows a compositional bias: basic and acidic residues. Residues S644, S667, S678, and S786 each carry the phosphoserine modification. 3 stretches are compositionally biased toward polar residues: residues 785-800 (ASQS…SSKT), 846-859 (EDQS…PQTE), and 870-882 (TVTS…TEAT). S873, S876, S877, and S890 each carry phosphoserine. Phosphothreonine is present on T893. 3 positions are modified to phosphoserine: S895, S899, and S908. The span at 944-954 (VTTSEKLSSQY) shows a compositional bias: polar residues. Phosphoserine occurs at positions 981, 991, 999, 1008, 1014, 1023, and 1062. T1068 is subject to Phosphothreonine. Positions 1096–1105 (GEAGAASGAG) are enriched in low complexity. The span at 1112-1124 (RTQEPAEPQKDEL) shows a compositional bias: basic and acidic residues. S1131, S1133, S1147, S1159, S1177, S1187, S1190, S1196, S1205, and S1208 each carry phosphoserine. The span at 1179 to 1189 (EDTQSLSFSEE) shows a compositional bias: polar residues. The span at 1197 to 1210 (LDISSKQLSPESLG) shows a compositional bias: polar residues. The span at 1223 to 1234 (EKGPLVKAEDNS) shows a compositional bias: basic and acidic residues. S1251, S1289, S1310, S1313, and S1316 each carry phosphoserine. Over residues 1302 to 1317 (TSDSSLTKSPESLSSP) the composition is skewed to low complexity. Basic and acidic residues-rich tracts occupy residues 1332–1350 (GSED…RKSE), 1370–1384 (SVMH…EENK), 1391–1435 (KTSE…KALE), 1449–1488 (PRAR…RAPE), 1499–1541 (RAPE…DQDN), and 1549–1599 (GTLK…EKTR). S1516, S1580, and S1606 each carry phosphoserine. Over residues 1609–1625 (EEGKAREQEEKYWKEQD) the composition is skewed to basic and acidic residues. Phosphoserine occurs at positions 1634 and 1648. A compositionally biased stretch (polar residues) spans 1709-1718 (QEITPLQHTP). Residues S1720, S1747, S1762, S1768, and S1772 each carry the phosphoserine modification. T1777 is modified (phosphothreonine). S1783 and S1789 each carry phosphoserine. Residues 1794-1808 (TKSTPPTRNEPTTPS) show a composition bias toward polar residues. A compositionally biased stretch (pro residues) spans 1823-1844 (LPPAPLSPAPAPPTPAPDPHAP). Residues 1878–1890 (KDYRKAEGEREGE) show a composition bias toward basic and acidic residues. S1902 bears the Phosphoserine mark. Composition is skewed to basic and acidic residues over residues 1907 to 1935 (EVTE…DERS) and 1972 to 1988 (STKE…EKEL). At T1928 the chain carries Phosphothreonine. Polar residues predominate over residues 1990-2006 (SAVSPPNLHSDTPTFSY). At S1993 the chain carries Phosphoserine. Positions 2013–2039 (TIPPRQEPEPGPNVEPSFTPPAVPPRA) are enriched in pro residues. A Phosphothreonine modification is found at T2031. Residues 2042–2058 (SLSQDPSPPLNGSTTSC) are compositionally biased toward polar residues. Residues S2048 and S2082 each carry the phosphoserine modification. The span at 2060–2096 (PDRRTPSPKEAGRSHWDDGTNDSDLEKGAREQPEKET) shows a compositional bias: basic and acidic residues. Residues 2149–2158 (PAPPQLPSPA) show a composition bias toward pro residues. Residues S2209, S2226, S2230, S2233, and S2234 each carry the phosphoserine modification. The segment covering 2231-2242 (EGSSSEATTPVI) has biased composition (polar residues). Residues 2279–2292 (PLSPAPLASRDLAP) show a composition bias toward low complexity. The segment covering 2355 to 2367 (AEKEEAEALHAWE) has biased composition (basic and acidic residues). S2425 carries the phosphoserine modification. Over residues 2478-2490 (SASDSGSSQSDSD) the composition is skewed to low complexity. Pro residues predominate over residues 2535–2551 (DPPPAPLPDPRPPPPRP). Positions 2566-2576 (GRVERLREKVQ) are enriched in basic and acidic residues. Residues S2623 and S2637 each carry the phosphoserine modification.

This sequence belongs to the MAP1 family. As to quaternary structure, 3 different light chains, LC1 (a cleavage product of MAP1B), LC2 (a cleavage product of MAP1A) and LC3 (produced by one of the MAP1LC3 genes), can associate with the MAP1A or MAP1B heavy chains. Interacts with guanylate kinase-like domain of DLG1, DLG2 and DLG4. Binds to CSNK1D. Interacts with TIAM2. In terms of assembly, interacts with ELAVL4. Post-translationally, phosphorylated by CSNK1D. LC2 is generated from MAP1A by proteolytic processing. It is free to associate with both MAP1A and MAP1B. Both isoforms highly expressed in brain, and to a lesser extent in embryo. Isoform 1 is also expressed at a low level in other tissues including heart and muscle.

The protein resides in the cytoplasm. Its subcellular location is the cytoskeleton. In terms of biological role, structural protein involved in the filamentous cross-bridging between microtubules and other skeletal elements. The polypeptide is Microtubule-associated protein 1A (Map1a) (Mus musculus (Mouse)).